A 255-amino-acid polypeptide reads, in one-letter code: Thiazole synthase (255 aa).

The Schiff-base intermediate with DXP role is filled by Lys-96. Residues Gly-157, 183 to 184 (AG), and 205 to 206 (NT) each bind 1-deoxy-D-xylulose 5-phosphate.

This sequence belongs to the ThiG family. Homotetramer. Forms heterodimers with either ThiH or ThiS.

It is found in the cytoplasm. It carries out the reaction [ThiS sulfur-carrier protein]-C-terminal-Gly-aminoethanethioate + 2-iminoacetate + 1-deoxy-D-xylulose 5-phosphate = [ThiS sulfur-carrier protein]-C-terminal Gly-Gly + 2-[(2R,5Z)-2-carboxy-4-methylthiazol-5(2H)-ylidene]ethyl phosphate + 2 H2O + H(+). Its pathway is cofactor biosynthesis; thiamine diphosphate biosynthesis. Its function is as follows. Catalyzes the rearrangement of 1-deoxy-D-xylulose 5-phosphate (DXP) to produce the thiazole phosphate moiety of thiamine. Sulfur is provided by the thiocarboxylate moiety of the carrier protein ThiS. In vitro, sulfur can be provided by H(2)S. This chain is Thiazole synthase, found in Staphylococcus epidermidis (strain ATCC 12228 / FDA PCI 1200).